The primary structure comprises 264 residues: S-adenosylmethionine decarboxylase proenzyme (264 aa).

S112 serves as the catalytic Schiff-base intermediate with substrate; via pyruvic acid. S112 is subject to Pyruvic acid (Ser); by autocatalysis. The active-site Proton acceptor; for processing activity is the H117. C140 (proton donor; for catalytic activity) is an active-site residue.

It belongs to the prokaryotic AdoMetDC family. Type 2 subfamily. Heterooctamer of four alpha and four beta chains arranged as a tetramer of alpha/beta heterodimers. Requires pyruvate as cofactor. In terms of processing, is synthesized initially as an inactive proenzyme. Formation of the active enzyme involves a self-maturation process in which the active site pyruvoyl group is generated from an internal serine residue via an autocatalytic post-translational modification. Two non-identical subunits are generated from the proenzyme in this reaction, and the pyruvate is formed at the N-terminus of the alpha chain, which is derived from the carboxyl end of the proenzyme. The post-translation cleavage follows an unusual pathway, termed non-hydrolytic serinolysis, in which the side chain hydroxyl group of the serine supplies its oxygen atom to form the C-terminus of the beta chain, while the remainder of the serine residue undergoes an oxidative deamination to produce ammonia and the pyruvoyl group blocking the N-terminus of the alpha chain.

The enzyme catalyses S-adenosyl-L-methionine + H(+) = S-adenosyl 3-(methylsulfanyl)propylamine + CO2. It participates in amine and polyamine biosynthesis; S-adenosylmethioninamine biosynthesis; S-adenosylmethioninamine from S-adenosyl-L-methionine: step 1/1. Functionally, catalyzes the decarboxylation of S-adenosylmethionine to S-adenosylmethioninamine (dcAdoMet), the propylamine donor required for the synthesis of the polyamines spermine and spermidine from the diamine putrescine. In Klebsiella pneumoniae subsp. pneumoniae (strain ATCC 700721 / MGH 78578), this protein is S-adenosylmethionine decarboxylase proenzyme.